The following is a 552-amino-acid chain: CTP synthase (552 aa).

Residues 1–267 (MAKFIFVTGG…AEQTLKLLRM (267 aa)) are amidoligase domain. Ser13 is a binding site for CTP. Ser13 is a binding site for UTP. ATP is bound by residues 14 to 19 (SIGKGI) and Asp71. 2 residues coordinate Mg(2+): Asp71 and Glu141. CTP contacts are provided by residues 148–150 (DIE), 188–193 (KTKPTQ), and Lys224. Residues 188–193 (KTKPTQ) and Lys224 contribute to the UTP site. In terms of domain architecture, Glutamine amidotransferase type-1 spans 292–534 (DIAIVGKYVQ…IQAAGNHKSQ (243 aa)). Gly354 lines the L-glutamine pocket. Catalysis depends on Cys381, which acts as the Nucleophile; for glutamine hydrolysis. L-glutamine is bound by residues 382–385 (LGMQ), Glu405, and Arg462. Active-site residues include His507 and Glu509. Residues 533-552 (SQPISDELDNQSTEMSISLS) are disordered.

Belongs to the CTP synthase family. Homotetramer.

It catalyses the reaction UTP + L-glutamine + ATP + H2O = CTP + L-glutamate + ADP + phosphate + 2 H(+). The enzyme catalyses L-glutamine + H2O = L-glutamate + NH4(+). It carries out the reaction UTP + NH4(+) + ATP = CTP + ADP + phosphate + 2 H(+). The protein operates within pyrimidine metabolism; CTP biosynthesis via de novo pathway; CTP from UDP: step 2/2. With respect to regulation, allosterically activated by GTP, when glutamine is the substrate; GTP has no effect on the reaction when ammonia is the substrate. The allosteric effector GTP functions by stabilizing the protein conformation that binds the tetrahedral intermediate(s) formed during glutamine hydrolysis. Inhibited by the product CTP, via allosteric rather than competitive inhibition. Its function is as follows. Catalyzes the ATP-dependent amination of UTP to CTP with either L-glutamine or ammonia as the source of nitrogen. Regulates intracellular CTP levels through interactions with the four ribonucleotide triphosphates. In Picosynechococcus sp. (strain ATCC 27264 / PCC 7002 / PR-6) (Agmenellum quadruplicatum), this protein is CTP synthase.